The following is a 365-amino-acid chain: MENIHIQTKSKEYDVHVGKESLSHLTTIVQNMQPSVSNIMIISDEAVAPLHLQTVVDALQIDQKVFSFVVPSGEKEKSFENFYAAHTSALENKLDRNSLIIALGGGMIGDLAGFVAASFMRGIRFVQVPTTLLAHDSAVGGKVAINHPLGKNMIGAFHQPEAVVYHTPFLQSLPEKEWRSGYAEVIKHALIGDVKLYHWLKEEVQTLADLRDEKLIHILTKAIPVKANIVAQDETEKGVRAHLNFGHTLGHALEKELGYGNITHGDGVAVGMLFAIFLSEQVYKVNLAYEEMKQWFLKYGYPKMPSDLSVERLVGLMKQDKKANAGTIHMVLMQEYGVVNVVSIPDETVHIALEAFQKDMGIRSR.

NAD(+)-binding positions include 72 to 77, 130 to 131, Lys-142, and Lys-151; these read SGEKEK and TT. Zn(2+) contacts are provided by Glu-184, His-247, and His-264.

The protein belongs to the sugar phosphate cyclases superfamily. Dehydroquinate synthase family. Co(2+) serves as cofactor. Zn(2+) is required as a cofactor. It depends on NAD(+) as a cofactor.

The protein resides in the cytoplasm. The enzyme catalyses 7-phospho-2-dehydro-3-deoxy-D-arabino-heptonate = 3-dehydroquinate + phosphate. It functions in the pathway metabolic intermediate biosynthesis; chorismate biosynthesis; chorismate from D-erythrose 4-phosphate and phosphoenolpyruvate: step 2/7. Its function is as follows. Catalyzes the conversion of 3-deoxy-D-arabino-heptulosonate 7-phosphate (DAHP) to dehydroquinate (DHQ). The protein is 3-dehydroquinate synthase of Bacillus cereus (strain AH187).